A 253-amino-acid chain; its full sequence is Protein C1orf43 homolog (253 aa).

The helical transmembrane segment at 11–31 (VNVVLVMAYGSLVFVLLFIFV) threads the bilayer. Residues 194–213 (SGSSQRQHQSAAKDLTQSPE) are disordered.

The protein localises to the membrane. The protein resides in the golgi apparatus. It localises to the mitochondrion. General regulator of phagocytosis. Required to uptake Gram negative bacterium by macrophages. The chain is Protein C1orf43 homolog from Bos taurus (Bovine).